Here is a 546-residue protein sequence, read N- to C-terminus: Glucose-6-phosphate isomerase 1 (546 aa).

Catalysis depends on E353, which acts as the Proton donor. Catalysis depends on residues H384 and K512.

It belongs to the GPI family.

Its subcellular location is the cytoplasm. The enzyme catalyses alpha-D-glucose 6-phosphate = beta-D-fructose 6-phosphate. It participates in carbohydrate biosynthesis; gluconeogenesis. The protein operates within carbohydrate degradation; glycolysis; D-glyceraldehyde 3-phosphate and glycerone phosphate from D-glucose: step 2/4. In terms of biological role, catalyzes the reversible isomerization of glucose-6-phosphate to fructose-6-phosphate. This chain is Glucose-6-phosphate isomerase 1, found in Colwellia psychrerythraea (strain 34H / ATCC BAA-681) (Vibrio psychroerythus).